Here is a 647-residue protein sequence, read N- to C-terminus: MGKIRKLDDQLSNLIAAGEVVERPASVVKELVENSIDANSTSIEIHLEEAGLSKIRIIDNGDGIAEEDCIVAFERHATSKIKDENDLFRIRTLGFRGEALPSIASVSELELITSTGDAPGTHLIIKGGDIIKQEKTASRKGTDITVQNLFFNTPARLKYMKTIHTELGNITDIVYRIAMSHPEVSLKLFHNEKKLLHTSGNGDVRQVLASIYSIQVAKKLVPIEAESLDFTITGYVTLPEVTRASRNYMSTIVNGRYVRNFVLMKAIQQGYHTLLPVGRYPIGFLSIEMDPMLVDVNVHPAKLEVRFSKEQELLKLIEETLQAAFKKIQLIPDAGVTTKKKEKDESVQEQFQFEHAKPKEPSMPDIVLPTGMDEKQEEPLPVKQPAQLWQPPKQEWQPPQSLVREEQSWQPSTRPIMEEPIREEKSWDSNEEDFELEELEEEVQEIKEIEMNGNDLPPLYPIGQMHGTYIFAQNDKGLYMIDQHAAQERINYEYFRDKVGRVAQEVQELLVPYRIDLSLTEFLRVEEQLEELKKVGLFLEQFGHQSFIVRSHPTWFPKGQETEIIDEMMEQVVKLKKVDIKKLREEAAIMMSCKASIKANQYLTNDQIFALLEELRTTTNPYTCPHGRPILVHHSTYELEKMFKRVM.

Belongs to the DNA mismatch repair MutL/HexB family.

This protein is involved in the repair of mismatches in DNA. It is required for dam-dependent methyl-directed DNA mismatch repair. May act as a 'molecular matchmaker', a protein that promotes the formation of a stable complex between two or more DNA-binding proteins in an ATP-dependent manner without itself being part of a final effector complex. The chain is DNA mismatch repair protein MutL from Bacillus cereus (strain G9842).